We begin with the raw amino-acid sequence, 234 residues long: Ribonuclease Trv (234 aa).

Cystine bridges form between cysteine 5/cysteine 24, cysteine 13/cysteine 59, cysteine 23/cysteine 125, cysteine 67/cysteine 117, and cysteine 189/cysteine 224. Asparagine 15 is a glycosylation site (N-linked (GlcNAc...) asparagine). Histidine 52 is an active-site residue. N-linked (GlcNAc...) asparagine glycosylation is present at asparagine 75. Catalysis depends on residues glutamate 110 and histidine 114.

This sequence belongs to the RNase T2 family.

It catalyses the reaction a ribonucleotidyl-ribonucleotide-RNA + H2O = a 3'-end 3'-phospho-ribonucleotide-RNA + a 5'-end dephospho-ribonucleoside-RNA + H(+). In terms of biological role, this is a base non-specific and adenylic acid preferential ribonuclease. The sequence is that of Ribonuclease Trv from Hypocrea rufa (Trichoderma viride).